A 524-amino-acid polypeptide reads, in one-letter code: Thioredoxin reductase 2, mitochondrial (524 aa).

A mitochondrion-targeting transit peptide spans 1 to 34 (MVAAMVAALRGPSRRFRPRTRALTRGTRGAASAA). FAD is bound at residue 41–70 (DLLVIGGGSGGLACAKEAAQLGKKVAVADY). Lys-79 carries the N6-succinyllysine modification. Residues Cys-86 and Cys-91 are joined by a disulfide bond. 2 positions are modified to N6-succinyllysine: Lys-175 and Lys-329. His-497 serves as the catalytic Proton acceptor. Positions 522-523 (CU) form a cross-link, cysteinyl-selenocysteine (Cys-Sec). Residue Sec-523 is a non-standard amino acid, selenocysteine.

The protein belongs to the class-I pyridine nucleotide-disulfide oxidoreductase family. As to quaternary structure, homodimer. FAD is required as a cofactor. Expressed in liver, heart, testis and kidney.

Its subcellular location is the mitochondrion. The enzyme catalyses [thioredoxin]-dithiol + NADP(+) = [thioredoxin]-disulfide + NADPH + H(+). Functionally, involved in the control of reactive oxygen species levels and the regulation of mitochondrial redox homeostasis. Maintains thioredoxin in a reduced state. May play a role in redox-regulated cell signaling. The sequence is that of Thioredoxin reductase 2, mitochondrial from Mus musculus (Mouse).